The sequence spans 184 residues: Cytidylate kinase (184 aa).

8–16 (GQPGSGKTT) contributes to the ATP binding site.

This sequence belongs to the cytidylate kinase family. Type 2 subfamily.

Its subcellular location is the cytoplasm. It catalyses the reaction CMP + ATP = CDP + ADP. The enzyme catalyses dCMP + ATP = dCDP + ADP. This Pyrobaculum islandicum (strain DSM 4184 / JCM 9189 / GEO3) protein is Cytidylate kinase.